The primary structure comprises 142 residues: Struthiocalcin-2 (142 aa).

3 cysteine pairs are disulfide-bonded: Cys6/Cys17, Cys34/Cys138, and Cys113/Cys130. Residues Phe13–Glu139 form the C-type lectin domain. Residues Ser62, Ser66, and Ser68 each carry the phosphoserine modification.

The protein resides in the secreted. It localises to the extracellular space. It is found in the extracellular matrix. The polypeptide is Struthiocalcin-2 (Struthio camelus (Common ostrich)).